Consider the following 1146-residue polypeptide: Large proline-rich protein BAG6 (1146 aa).

At M1 the chain carries N-acetylmethionine. Positions 17–92 (LEVLVKTLDS…HLVERAPPQT (76 aa)) constitute a Ubiquitin-like domain. Disordered regions lie at residues 87–128 (RAPP…HDRN), 186–268 (RGGT…HPSP), 381–436 (TMTG…TSHP), 457–525 (QDSG…QGAG), and 555–618 (PGMA…SAAD). Phosphoserine is present on S96. A compositionally biased stretch (low complexity) spans 96–108 (SGASSGTGSASAT). A compositionally biased stretch (gly residues) spans 109 to 122 (HGGGPLPGTRGPGA). Phosphothreonine is present on T117. A compositionally biased stretch (polar residues) spans 208 to 217 (VALNSQTSEP). Repeat copies occupy residues 236-265 (RPPT…APNH) and 410-438 (PSSA…HPRV). The segment at 236–650 (RPPTQTPELP…LASPTITVAV (415 aa)) is 4 X 29 AA approximate repeats. The segment covering 239 to 257 (TQTPELPPSGPAPAGPAPA) has biased composition (pro residues). Over residues 394–413 (GAEAASPGSGQASSLPPSSA) the composition is skewed to low complexity. Composition is skewed to pro residues over residues 422–433 (APPPGPAPPPAT) and 502–515 (PTPP…PGGP). 2 stretches are compositionally biased toward low complexity: residues 555-573 (PGMA…AQAP) and 583-601 (PATA…TAGP). 2 repeat units span residues 589–616 (SAGT…QPSA) and 622–650 (SQLL…TVAV). A compositionally biased stretch (pro residues) spans 603 to 614 (PGGPAQPPPPQP). 2 disordered regions span residues 666–711 (ASQA…ESLP) and 961–1146 (PQAL…ADDP). Positions 670 to 694 (APPPPPPPPPPPPAPEQQTTPPPGS) are enriched in pro residues. Residues 977–986 (TSPEPQREDA) show a composition bias toward basic and acidic residues. A phosphoserine mark is found at S978 and S987. Low complexity predominate over residues 1021 to 1034 (AEPWAAAVPPEWVP). The required for interaction with GET4 stretch occupies residues 1024–1054 (WAAAVPPEWVPIIQQDIQSQRKVKPQPPLSD). The short motif at 1026–1068 (AAVPPEWVPIIQQDIQSQRKVKPQPPLSDAYLSGMPAKRRKTM) is the Nuclear localization site element. The segment at 1036 to 1146 (IQQDIQSQRK…NAHRAFADDP (111 aa)) is sufficient for the delivery of client proteins to the endoplasmic reticulum. T1067 is modified (phosphothreonine). Residues 1072 to 1129 (GPQLLLSEAVSRAAKAAGARPLTSPESLSRDLEAPEVQESYRQQLRSDIQKRLQEDPN) are BAG-similar domain, required and sufficient for interaction with UBL4A. The segment covering 1080 to 1090 (AVSRAAKAAGA) has biased composition (low complexity). Residues S1095 and S1131 each carry the phosphoserine modification.

In terms of assembly, component of the BAG6/BAT3 complex, also named BAT3 complex, at least composed of BAG6, UBL4A and GET4/TRC35. Interacts with GET4; the interaction is direct and localizes BAG6 in the cytosol. Interacts with UBL4A; the interaction is direct and required for UBL4A protein stability. Interacts with AIFM1. Interacts with HSPA2. Interacts with CTCFL. Interacts with p300/EP300. Interacts (via ubiquitin-like domain) with RNF126; required for BAG6-dependent ubiquitination of proteins mislocalized to the cytosol. Interacts (via ubiquitin-like domain) with SGTA; SGTA competes with RNF126 by binding the same region of BAG6, thereby promoting deubiquitination of BAG6-target proteins and rescuing them from degradation. Interacts with ricin A chain. Interacts with VCP and AMFR; both form the VCP/p97-AMFR/gp78 complex. Interacts with SYVN1. Interacts with USP13; the interaction is direct and may mediate UBL4A deubiquitination. Interacts with ZFAND2B. Interacts with KPNA2. Interacts with UBQLN4. Ricin can induce a cleavage by the caspase CASP3. The released C-terminal peptide induces apoptosis.

It is found in the cytoplasm. Its subcellular location is the cytosol. It localises to the nucleus. The protein localises to the secreted. The protein resides in the extracellular exosome. Its function is as follows. ATP-independent molecular chaperone preventing the aggregation of misfolded and hydrophobic patches-containing proteins. Functions as part of a cytosolic protein quality control complex, the BAG6/BAT3 complex, which maintains these client proteins in a soluble state and participates in their proper delivery to the endoplasmic reticulum or alternatively can promote their sorting to the proteasome where they undergo degradation. The BAG6/BAT3 complex is involved in the post-translational delivery of tail-anchored/type II transmembrane proteins to the endoplasmic reticulum membrane. Recruited to ribosomes, it interacts with the transmembrane region of newly synthesized tail-anchored proteins and together with SGTA and ASNA1 mediates their delivery to the endoplasmic reticulum. Client proteins that cannot be properly delivered to the endoplasmic reticulum are ubiquitinated by RNF126, an E3 ubiquitin-protein ligase associated with BAG6 and are sorted to the proteasome. SGTA which prevents the recruitment of RNF126 to BAG6 may negatively regulate the ubiquitination and the proteasomal degradation of client proteins. Similarly, the BAG6/BAT3 complex also functions as a sorting platform for proteins of the secretory pathway that are mislocalized to the cytosol either delivering them to the proteasome for degradation or to the endoplasmic reticulum. The BAG6/BAT3 complex also plays a role in the endoplasmic reticulum-associated degradation (ERAD), a quality control mechanism that eliminates unwanted proteins of the endoplasmic reticulum through their retrotranslocation to the cytosol and their targeting to the proteasome. It maintains these retrotranslocated proteins in an unfolded yet soluble state condition in the cytosol to ensure their proper delivery to the proteasome. BAG6 is also required for selective ubiquitin-mediated degradation of defective nascent chain polypeptides by the proteasome. In this context, it may participate in the production of antigenic peptides and play a role in antigen presentation in immune response. BAG6 is also involved in endoplasmic reticulum stress-induced pre-emptive quality control, a mechanism that selectively attenuates the translocation of newly synthesized proteins into the endoplasmic reticulum and reroutes them to the cytosol for proteasomal degradation. BAG6 may ensure the proper degradation of these proteins and thereby protects the endoplasmic reticulum from protein overload upon stress. By inhibiting the polyubiquitination and subsequent proteasomal degradation of HSPA2 it may also play a role in the assembly of the synaptonemal complex during spermatogenesis. Also positively regulates apoptosis by interacting with and stabilizing the proapoptotic factor AIFM1. By controlling the steady-state expression of the IGF1R receptor, indirectly regulates the insulin-like growth factor receptor signaling pathway. Involved in DNA damage-induced apoptosis: following DNA damage, accumulates in the nucleus and forms a complex with p300/EP300, enhancing p300/EP300-mediated p53/TP53 acetylation leading to increase p53/TP53 transcriptional activity. When nuclear, may also act as a component of some chromatin regulator complex that regulates histone 3 'Lys-4' dimethylation (H3K4me2). In terms of biological role, released extracellularly via exosomes, it is a ligand of the natural killer/NK cells receptor NCR3 and stimulates NK cells cytotoxicity. It may thereby trigger NK cells cytotoxicity against neighboring tumor cells and immature myeloid dendritic cells (DC). Functionally, may mediate ricin-induced apoptosis. The sequence is that of Large proline-rich protein BAG6 from Rattus norvegicus (Rat).